Reading from the N-terminus, the 486-residue chain is MATFKDACYHYKRINKLNHTVLKLGVNDTWRPSPPTKYKGWCLDCCQHTDLTYCRGCTMYHVCQWCSQYGRCFLDNEPHLLRMRTFKNEVTKDDLKNLIDMYETLFPMNQRIVCRFINNTRQHKCRNECMTQWYNHLLLPITLQSMSIELDGDVYYVFGYYDNMNSINQTPFSFTNLVDIYDKLLLDDVNFTRMSFLPASLQQEYALRYFSKSRFISEQRKCVNDSHFSINVIENLHNPSFKVQITRNCSELSFDWNKACKLVKKISAYFDILKTSHIEFYSVSTRCRIFTQCKLKMASKLIKPNYITSNHKTLATEVHNCKWCSVNNSYTVWNDFRIKNIYDNIFNFLRALVKSNVNIGHCSSQEKIYEYVEDVLNVCDDERWKTSIMEIFNCLEPVELDDVKYVLLNHEINWDVINVLVHSIGKVPQILTLENVIAIMQSIIYEWFDIRYMRNTPMVTFTIDKLRRLHTGLKTVDYDSGISDIE.

Residues 1–81 (MATFKDACYH…CFLDNEPHLL (81 aa)) are RNA-binding. The zinc-binding domain stretch occupies residues 42 to 79 (CLDCCQHTDLTYCRGCTMYHVCQWCSQYGRCFLDNEPH). Positions 82–176 (RMRTFKNEVT…INQTPFSFTN (95 aa)) are important for cytoskeleton localization. Residues 317–486 (EVHNCKWCSV…DYDSGISDIE (170 aa)) form an interaction with host IRF3 region. The IKBKB-like degron (ILD) motif signature appears at 479-483 (DSGIS). Positions 480 to 483 (SGIS) match the pLxIS motif motif.

This sequence belongs to the rotavirus NSP1 family. Interacts (via C-terminus) with host IRF3; this interaction leads to IRF3 degradation. Interacts with host IRF7; this interaction leads to IRF7 degradation. Interacts with host CUL1 and CUL3. Interacts with host BTRC. In terms of processing, the C-terminal region is phosphorylated by host CKII/CSNK2A1. Phosphorylation of the DSGXS motif is essential for host NF-kappa-B inhibition.

Its subcellular location is the host cytoplasm. It is found in the host cytoskeleton. In terms of biological role, plays a role in the inhibition of host innate immunity by inducing the degradation of key host factors required to activate interferon production such as IRF3, IRF5 or IRF7. Associates with components of cullin RING ligases (CRLs) including CUL1 or CUL3, which are essential multisubunit ubiquitination complexes, to modulate their activities. Recognizes the host NF-kappa-B regulator BTRC through the presence of a DSGXS motif in the C-terminal substrate recognition domain. In Rotavirus A (isolate RVA/Human/Japan/IGV-80-3/XXXX/GXP[X]) (RV-A), this protein is Non-structural protein 1.